The chain runs to 95 residues: Large ribosomal subunit protein bL25 (95 aa).

Belongs to the bacterial ribosomal protein bL25 family. As to quaternary structure, part of the 50S ribosomal subunit; part of the 5S rRNA/L5/L18/L25 subcomplex. Contacts the 5S rRNA. Binds to the 5S rRNA independently of L5 and L18.

This is one of the proteins that binds to the 5S RNA in the ribosome where it forms part of the central protuberance. The polypeptide is Large ribosomal subunit protein bL25 (Tolumonas auensis (strain DSM 9187 / NBRC 110442 / TA 4)).